A 282-amino-acid chain; its full sequence is HTH-type transcriptional activator RhaR (282 aa).

The HTH araC/xylS-type domain maps to 179–277 (DKLITRLAAS…GMTPSQWRHL (99 aa)). DNA-binding regions (H-T-H motif) lie at residues 196 to 217 (DKFC…RQQT) and 244 to 267 (ISDI…TRET).

As to quaternary structure, binds DNA as a dimer.

Its subcellular location is the cytoplasm. In terms of biological role, activates expression of the rhaSR operon in response to L-rhamnose. The polypeptide is HTH-type transcriptional activator RhaR (Escherichia coli O1:K1 / APEC).